A 449-amino-acid polypeptide reads, in one-letter code: 5'-deoxyadenosine deaminase (449 aa).

His79 and His81 together coordinate Zn(2+). Substrate is bound by residues Glu108 and His200. Zn(2+) is bound at residue His227. Substrate-binding residues include Glu230 and Asp316. Asp316 serves as a coordination point for Zn(2+).

Belongs to the metallo-dependent hydrolases superfamily. MTA/SAH deaminase family. Homotetramer. Zn(2+) serves as cofactor.

The enzyme catalyses 5'-deoxyadenosine + H2O + H(+) = 5'-deoxyinosine + NH4(+). It carries out the reaction S-adenosyl-L-homocysteine + H2O + H(+) = S-inosyl-L-homocysteine + NH4(+). The catalysed reaction is S-methyl-5'-thioadenosine + H2O + H(+) = S-methyl-5'-thioinosine + NH4(+). It catalyses the reaction adenosine + H2O + H(+) = inosine + NH4(+). The protein operates within amino-acid biosynthesis; S-adenosyl-L-methionine biosynthesis. Catalyzes the deamination of three SAM-derived enzymatic products, namely 5'-deoxyadenosine, S-adenosyl-L-homocysteine, and 5'-methylthioadenosine, to produce the inosine analogs. Can also deaminate adenosine. The preferred substrate for this enzyme is 5'-deoxyadenosine, but all these substrates are efficiently deaminated. Likely functions in a S-adenosyl-L-methionine (SAM) recycling pathway from S-adenosyl-L-homocysteine (SAH) produced from SAM-dependent methylation reactions. May also be involved in the recycling of 5'-deoxyadenosine, whereupon the 5'-deoxyribose moiety of 5'-deoxyinosine is further metabolized to deoxyhexoses used for the biosynthesis of aromatic amino acids in methanogens. In Methanospirillum hungatei JF-1 (strain ATCC 27890 / DSM 864 / NBRC 100397 / JF-1), this protein is 5'-deoxyadenosine deaminase.